The following is a 123-amino-acid chain: Large ribosomal subunit protein uL14c (123 aa).

This sequence belongs to the universal ribosomal protein uL14 family. Part of the 50S ribosomal subunit.

The protein resides in the plastid. Its subcellular location is the chloroplast. Its function is as follows. Binds to 23S rRNA. This is Large ribosomal subunit protein uL14c from Saccharum hybrid (Sugarcane).